The primary structure comprises 104 residues: Large ribosomal subunit protein uL23 (104 aa).

Belongs to the universal ribosomal protein uL23 family. As to quaternary structure, part of the 50S ribosomal subunit. Contacts protein L29, and trigger factor when it is bound to the ribosome.

In terms of biological role, one of the early assembly proteins it binds 23S rRNA. One of the proteins that surrounds the polypeptide exit tunnel on the outside of the ribosome. Forms the main docking site for trigger factor binding to the ribosome. The protein is Large ribosomal subunit protein uL23 of Paraburkholderia phymatum (strain DSM 17167 / CIP 108236 / LMG 21445 / STM815) (Burkholderia phymatum).